The primary structure comprises 514 residues: Butyrophilin subfamily 2 member A2 (514 aa).

An N-terminal signal peptide occupies residues 1–29; the sequence is MEPTTSLRSCPIASLLFFLVLSLFVLVSA. One can recognise an Ig-like V-type domain in the interval 30 to 142; sequence QFTVIGPAEP…SYDQATMKLM (113 aa). Residues 30 to 244 lie on the Extracellular side of the membrane; it reads QFTVIGPAEP…ILIPESFVPS (215 aa). N-linked (GlcNAc...) asparagine glycosylation is found at N47 and N115. Intrachain disulfides connect C52–C126 and C166–C220. Positions 150–232 constitute an Ig-like C2-type domain; sequence PLIKMKTLED…NNTLLSQEVE (83 aa). Residues 245–265 form a helical membrane-spanning segment; the sequence is LPLWMVAVAVTLPVVMLILLT. Over 266–514 the chain is Cytoplasmic; sequence SGSICLVKKH…PISQSLVRKP (249 aa). The stretch at 281-304 forms a coiled coil; the sequence is ILSAEKEAEYEEKEAARQLQEELR. The B30.2/SPRY domain occupies 295-488; that stretch reads AARQLQEELR…LFICPAFTGA (194 aa).

This sequence belongs to the immunoglobulin superfamily. BTN/MOG family. In terms of processing, N-glycosylated. As to expression, widely expressed (at protein level). In the thymus, restricted to the corticomedullary junction, but not confined solely to epithelial cells (at protein level). Significant expression on naive B-cells, splenic natural killer cells, dendritic cells and peritoneal macrophages (at protein level). Negligible expression on naive T-cells up-regulated on activated T-cells (at protein level).

It localises to the membrane. Functionally, inhibits the proliferation of CD4 and CD8 T-cells activated by anti-CD3 antibodies, T-cell metabolism and IL2 and IFNG secretion. This is Butyrophilin subfamily 2 member A2 (Btn2a2) from Mus musculus (Mouse).